The sequence spans 336 residues: MYYPFVRKALFQLDPERAHEFTFQQLRRITGTPFEALVRQKVPAKPVNCMGLTFKNPLGLAAGLDKDGECIDALGAMGFGSIEIGTVTPRPQPGNDKPRLFRLVDAEGLINRMGFNNFGVDNLVENVKKAHYDGVLGINIGKNKDTPVEQGKDDYLICMEKIYAYAGYIAINISSPNTPGLRTLQYGEALDDLLTAIKNKQNDLQAMHHKYVPIAVKIAPDLSEDELIQVADSLVRHNIDGVIATNTTLDRSLVQGMKNCDQTGGLSGRPLQLKSTEIIRRLSLELNGRLPIIGVGGIDSVIAAREKIAAGASLVQIYSGFIFKGPPLIKEIVTHI.

FMN-binding positions include 62-66 and Thr-86; that span reads AGLDK. Lys-66 serves as a coordination point for substrate. 111-115 serves as a coordination point for substrate; the sequence is NRMGF. Residues Asn-139 and Asn-172 each coordinate FMN. Asn-172 serves as a coordination point for substrate. Ser-175 functions as the Nucleophile in the catalytic mechanism. Asn-177 serves as a coordination point for substrate. Lys-217 and Thr-245 together coordinate FMN. 246–247 contributes to the substrate binding site; that stretch reads NT. Residues Gly-268, Gly-297, and 318–319 each bind FMN; that span reads YS.

It belongs to the dihydroorotate dehydrogenase family. Type 2 subfamily. Monomer. It depends on FMN as a cofactor.

The protein resides in the cell membrane. The catalysed reaction is (S)-dihydroorotate + a quinone = orotate + a quinol. Its pathway is pyrimidine metabolism; UMP biosynthesis via de novo pathway; orotate from (S)-dihydroorotate (quinone route): step 1/1. Functionally, catalyzes the conversion of dihydroorotate to orotate with quinone as electron acceptor. The chain is Dihydroorotate dehydrogenase (quinone) from Shigella dysenteriae serotype 1 (strain Sd197).